The primary structure comprises 169 residues: Lipoprotein signal peptidase (169 aa).

The next 4 membrane-spanning stretches (helical) occupy residues 10-30, 40-60, 68-88, and 94-114; these read LPWL…KAFF, IVVI…AAFS, WQRW…VVWL, and GETW…GNLY. Active-site residues include aspartate 124 and aspartate 143. Residues 135 to 155 traverse the membrane as a helical segment; it reads YFPAFNLADSAITVGAVMLAL.

This sequence belongs to the peptidase A8 family.

The protein localises to the cell inner membrane. It carries out the reaction Release of signal peptides from bacterial membrane prolipoproteins. Hydrolyzes -Xaa-Yaa-Zaa-|-(S,diacylglyceryl)Cys-, in which Xaa is hydrophobic (preferably Leu), and Yaa (Ala or Ser) and Zaa (Gly or Ala) have small, neutral side chains.. It functions in the pathway protein modification; lipoprotein biosynthesis (signal peptide cleavage). In terms of biological role, this protein specifically catalyzes the removal of signal peptides from prolipoproteins. This is Lipoprotein signal peptidase from Pseudomonas aeruginosa (strain UCBPP-PA14).